The following is a 445-amino-acid chain: Tubulin beta-2B chain (445 aa).

Residues 1–4 carry the MREI motif motif; the sequence is MREI. Glutamine 11 contacts GTP. Serine 40 carries the post-translational modification Phosphoserine. Threonine 55 carries the post-translational modification Phosphothreonine. At lysine 58 the chain carries N6-acetyllysine; alternate. Lysine 58 bears the N6-succinyllysine; alternate mark. Residue lysine 58 forms a Glycyl lysine isopeptide (Lys-Gly) (interchain with G-Cter in ubiquitin); alternate linkage. GTP contacts are provided by glutamate 69, serine 138, glycine 142, threonine 143, and glycine 144. Glutamate 69 serves as a coordination point for Mg(2+). Residue serine 172 is modified to Phosphoserine; by CDK1. GTP contacts are provided by asparagine 204 and asparagine 226. Residues threonine 285 and threonine 290 each carry the phosphothreonine modification. Arginine 318 is subject to Omega-N-methylarginine. Residue lysine 324 forms a Glycyl lysine isopeptide (Lys-Gly) (interchain with G-Cter in ubiquitin) linkage. The segment at 422-445 is disordered; sequence YQQYQDATADEQGEFEEEEGEDEA. Residues 429–445 are compositionally biased toward acidic residues; that stretch reads TADEQGEFEEEEGEDEA. 5-glutamyl polyglutamate is present on glutamate 438.

The protein belongs to the tubulin family. Dimer of alpha and beta chains. A typical microtubule is a hollow water-filled tube with an outer diameter of 25 nm and an inner diameter of 15 nM. Alpha-beta heterodimers associate head-to-tail to form protofilaments running lengthwise along the microtubule wall with the beta-tubulin subunit facing the microtubule plus end conferring a structural polarity. Microtubules usually have 13 protofilaments but different protofilament numbers can be found in some organisms and specialized cells. Mg(2+) serves as cofactor. Post-translationally, some glutamate residues at the C-terminus are polyglycylated, resulting in polyglycine chains on the gamma-carboxyl group. Glycylation is mainly limited to tubulin incorporated into axonemes (cilia and flagella) whereas glutamylation is prevalent in neuronal cells, centrioles, axonemes, and the mitotic spindle. Both modifications can coexist on the same protein on adjacent residues, and lowering polyglycylation levels increases polyglutamylation, and reciprocally. The precise function of polyglycylation is still unclear. Some glutamate residues at the C-terminus are polyglutamylated, resulting in polyglutamate chains on the gamma-carboxyl group. Polyglutamylation plays a key role in microtubule severing by spastin (SPAST). SPAST preferentially recognizes and acts on microtubules decorated with short polyglutamate tails: severing activity by SPAST increases as the number of glutamates per tubulin rises from one to eight, but decreases beyond this glutamylation threshold. In terms of processing, phosphorylated on Ser-172 by CDK1 during the cell cycle, from metaphase to telophase, but not in interphase. This phosphorylation inhibits tubulin incorporation into microtubules.

Its subcellular location is the cytoplasm. The protein localises to the cytoskeleton. In terms of biological role, tubulin is the major constituent of microtubules, a cylinder consisting of laterally associated linear protofilaments composed of alpha- and beta-tubulin heterodimers. Microtubules grow by the addition of GTP-tubulin dimers to the microtubule end, where a stabilizing cap forms. Below the cap, tubulin dimers are in GDP-bound state, owing to GTPase activity of alpha-tubulin. Implicated in neuronal migration. This is Tubulin beta-2B chain (TUBB2B) from Bos taurus (Bovine).